Reading from the N-terminus, the 483-residue chain is GTPase Der (483 aa).

2 consecutive EngA-type G domains span residues 3–167 (FTLA…GEER) and 212–387 (LRIA…EIWN). Residues 9–16 (GRPNVGKS), 56–60 (DTAGL), 119–122 (NKAE), 218–225 (GRPNAGKS), 265–269 (DTAGM), and 330–333 (NKWD) contribute to the GTP site. One can recognise a KH-like domain in the interval 388–472 (RRISTGRLNR…PIRLSLRTSD (85 aa)).

It belongs to the TRAFAC class TrmE-Era-EngA-EngB-Septin-like GTPase superfamily. EngA (Der) GTPase family. As to quaternary structure, associates with the 50S ribosomal subunit.

In terms of biological role, GTPase that plays an essential role in the late steps of ribosome biogenesis. The polypeptide is GTPase Der (Brucella melitensis biotype 2 (strain ATCC 23457)).